We begin with the raw amino-acid sequence, 255 residues long: 3-deoxy-manno-octulosonate cytidylyltransferase (255 aa).

The protein belongs to the KdsB family.

Its subcellular location is the cytoplasm. The catalysed reaction is 3-deoxy-alpha-D-manno-oct-2-ulosonate + CTP = CMP-3-deoxy-beta-D-manno-octulosonate + diphosphate. Its pathway is nucleotide-sugar biosynthesis; CMP-3-deoxy-D-manno-octulosonate biosynthesis; CMP-3-deoxy-D-manno-octulosonate from 3-deoxy-D-manno-octulosonate and CTP: step 1/1. It participates in bacterial outer membrane biogenesis; lipopolysaccharide biosynthesis. Its function is as follows. Activates KDO (a required 8-carbon sugar) for incorporation into bacterial lipopolysaccharide in Gram-negative bacteria. The polypeptide is 3-deoxy-manno-octulosonate cytidylyltransferase (Cellvibrio japonicus (strain Ueda107) (Pseudomonas fluorescens subsp. cellulosa)).